The sequence spans 310 residues: Calbindin-32 (310 aa).

EF-hand domains follow at residues leucine 35–serine 70, threonine 84–phenylalanine 120, glutamate 131–glutamate 166, lysine 177–phenylalanine 212, leucine 224–leucine 259, and threonine 283–isoleucine 304. Ca(2+)-binding residues include aspartate 48, aspartate 50, asparagine 52, tyrosine 54, glutamate 59, aspartate 98, asparagine 100, aspartate 102, lysine 104, glutamate 109, aspartate 144, aspartate 146, serine 148, tyrosine 150, glutamate 155, aspartate 190, asparagine 192, aspartate 194, arginine 196, glutamate 201, aspartate 237, aspartate 239, serine 241, threonine 243, and glutamate 248.

This sequence belongs to the calbindin family. In terms of tissue distribution, expressed in a large number of neuron of the brain and the thoracic ganglion as well as in two small muscles of the thorax.

This is Calbindin-32 (Cbp53E) from Drosophila melanogaster (Fruit fly).